Reading from the N-terminus, the 257-residue chain is Homeobox protein goosecoid (257 aa).

A DNA-binding region (homeobox) is located at residues 160–219 (KRRHRTIFTDEQLEALENLFQETKYPDVGTREQLARKVHLREEKVEVWFKNRRAKWRRQK). Residues 213-257 (AKWRRQKRSSSEESENAEKWNKTSSSKASPEKREEEGKSDLDSDS) are disordered. Positions 241–257 (SPEKREEEGKSDLDSDS) are enriched in basic and acidic residues.

The protein belongs to the paired homeobox family. Bicoid subfamily.

The protein resides in the nucleus. Functionally, regulates chordin (CHRD). May play a role in spatial programing within discrete embryonic fields or lineage compartments during organogenesis. In concert with NKX3-2, plays a role in defining the structural components of the middle ear; required for the development of the entire tympanic ring. Probably involved in the regulatory networks that define neural crest cell fate specification and determine mesoderm cell lineages in mammals. In Saguinus labiatus (Red-chested mustached tamarin), this protein is Homeobox protein goosecoid (GSC).